The primary structure comprises 562 residues: Endoglucanase E1 (562 aa).

The N-terminal stretch at 1-41 (MPRALRRVPGSRVMLRVGVVVAVLALVAALANLAVPRPARA) is a signal peptide. A catalytic region spans residues 42–400 (AGGGYWHTSG…IKSSIFDPVG (359 aa)). C75 and C161 are joined by a disulfide. E203 acts as the Proton donor in catalysis. A disulfide bond links C209 and C212. The active-site Nucleophile is E323. A disordered region spans residues 399–462 (VGASASPSSQ…PTPSPTAASG (64 aa)). Composition is skewed to low complexity over residues 401-411 (ASASPSSQPSP) and 437-449 (PTPT…TPTP). The 105-residue stretch at 458 to 562 (TAASGARCTA…AAPTVACAAS (105 aa)) folds into the CBM2 domain.

Belongs to the glycosyl hydrolase 5 (cellulase A) family.

It catalyses the reaction Endohydrolysis of (1-&gt;4)-beta-D-glucosidic linkages in cellulose, lichenin and cereal beta-D-glucans.. In terms of biological role, has a very high specific activity on carboxymethylcellulose. The polypeptide is Endoglucanase E1 (Acidothermus cellulolyticus (strain ATCC 43068 / DSM 8971 / 11B)).